A 486-amino-acid polypeptide reads, in one-letter code: uncharacterized protein (486 aa).

The chain crosses the membrane as a helical span at residues 18 to 38 (TLLQLFVFTVICVFVLSGLAI). Residues 62–79 (DRQKQMEKQQDSGEKRSF) show a composition bias toward basic and acidic residues. 2 disordered regions span residues 62-82 (DRQK…FEST) and 117-147 (IESS…GPQM). The segment covering 119-132 (SSSSSDSSSSSSSS) has biased composition (low complexity). 3 helical membrane passes run 324–344 (VVYL…MMSI), 365–385 (IGQF…LASV), and 451–471 (MLIL…LPSI).

The protein belongs to the ABC-4 integral membrane protein family.

It is found in the cell membrane. This is an uncharacterized protein from Bacillus subtilis (strain 168).